Here is a 90-residue protein sequence, read N- to C-terminus: Probable Fe(2+)-trafficking protein (90 aa).

This sequence belongs to the Fe(2+)-trafficking protein family.

In terms of biological role, could be a mediator in iron transactions between iron acquisition and iron-requiring processes, such as synthesis and/or repair of Fe-S clusters in biosynthetic enzymes. In Coxiella burnetii (strain CbuG_Q212) (Coxiella burnetii (strain Q212)), this protein is Probable Fe(2+)-trafficking protein.